The chain runs to 201 residues: 5'-deoxynucleotidase HDDC2 (201 aa).

The region spanning 43–145 (VSDHMYRMAV…VKELDQCEMI (103 aa)) is the HD domain. Residues His46, His74, Asp75, Glu78, Asp83, Ile84, and Asp140 each coordinate a divalent metal cation.

It belongs to the HDDC2 family. As to quaternary structure, homodimer. Mn(2+) serves as cofactor. Requires Co(2+) as cofactor. It depends on Mg(2+) as a cofactor.

The enzyme catalyses a 2'-deoxyribonucleoside 5'-phosphate + H2O = a 2'-deoxyribonucleoside + phosphate. In terms of biological role, catalyzes the dephosphorylation of the nucleoside 5'-monophosphates deoxyadenosine monophosphate (dAMP), deoxycytidine monophosphate (dCMP), deoxyguanosine monophosphate (dGMP) and deoxythymidine monophosphate (dTMP). The protein is 5'-deoxynucleotidase HDDC2 (hddc2) of Xenopus laevis (African clawed frog).